The primary structure comprises 80 residues: MSEFWHKLGCCVVEKPQPKKKRRRIDRTMIGEPMNFVHLTHIGSGEMGAGDGLAMTGAVQEQMRSKGNHRDRPWSNSRAL.

2 S-palmitoyl cysteine lipidation sites follow: Cys10 and Cys11. The region spanning 30 to 43 (IGEPMNFVHLTHIG) is the CRIB domain. The segment at 48–80 (GAGDGLAMTGAVQEQMRSKGNHRDRPWSNSRAL) is disordered.

The protein belongs to the CDC42SE/SPEC family. As to quaternary structure, interacts with CDC42 (in GTP-bound form). Interacts weakly with RAC1 and not at all with RHOA.

The protein resides in the cytoplasm. The protein localises to the cytoskeleton. It localises to the cell membrane. In terms of biological role, probably involved in the organization of the actin cytoskeleton by acting downstream of CDC42, inducing actin filament assembly. Alters CDC42-induced cell shape changes. In activated T-cells, may play a role in CDC42-mediated F-actin accumulation at the immunological synapse. May play a role in early contractile events in phagocytosis in macrophages. The chain is CDC42 small effector protein 1 (Cdc42se1) from Mus musculus (Mouse).